The following is a 373-amino-acid chain: MMKKDAPRGTRTGFTTGACSAAAARAAVIGLVTGQVPDAVECLLPNGDLVTFAVQDGRVEGVGGGVGGGVSAHAMVIKDAGDDPDCTDKAHLTADVRLRHDLPGQVLLAGGFGVGTVTMPGLGLAVGGPAINPVPRRNIEANVRAVGQGLLDEVGLEVTISVPQGEEMTKKTLNARLGILGGISILGTTGIVKPYSTAAYRASVVQGVQVAGTLGHGVVVLTTGGRTEKFVMEEMPELPEPAFVQMGDFLRYAMGAAVKAGLKKVVIGGMVGKLTKIAQGETITHAGRAEVDTGLLAELAASVGAPPDVCDAIRGNETARYAGERMDALGLGQAFHTALAQRVIQTLRTRYPDQFELKVLVCDFDGRKIAEAS.

The protein belongs to the CbiD family.

It catalyses the reaction Co-precorrin-5B + S-adenosyl-L-methionine = Co-precorrin-6A + S-adenosyl-L-homocysteine. It functions in the pathway cofactor biosynthesis; adenosylcobalamin biosynthesis; cob(II)yrinate a,c-diamide from sirohydrochlorin (anaerobic route): step 6/10. Functionally, catalyzes the methylation of C-1 in cobalt-precorrin-5B to form cobalt-precorrin-6A. This Polaromonas sp. (strain JS666 / ATCC BAA-500) protein is Cobalt-precorrin-5B C(1)-methyltransferase.